Reading from the N-terminus, the 246-residue chain is Tyrosine recombinase XerD-like (246 aa).

Residues 1 to 72 (MINDINNFIE…AVNQFLFFLY (72 aa)) form the Core-binding (CB) domain. The Tyr recombinase domain occupies 84–246 (QETEKITLAQ…TPITLERYYR (163 aa)). Active-site residues include K149 and R212. Y244 acts as the O-(3'-phospho-DNA)-tyrosine intermediate in catalysis.

The protein belongs to the 'phage' integrase family. XerD-like subfamily.

The protein resides in the cytoplasm. Its function is as follows. Putative tyrosine recombinase. Not involved in the cutting and rejoining of the recombining DNA molecules on dif(SL) site. The protein is Tyrosine recombinase XerD-like of Streptococcus agalactiae serotype V (strain ATCC BAA-611 / 2603 V/R).